The primary structure comprises 268 residues: DNA repair protein RecO (268 aa).

Belongs to the RecO family.

Its function is as follows. Involved in DNA repair and RecF pathway recombination. This Mycobacterium leprae (strain Br4923) protein is DNA repair protein RecO.